Consider the following 400-residue polypeptide: Na(+)/H(+) antiporter NhaA (400 aa).

12 helical membrane passes run 26-46 (AGGILLLFSAVVAMLLANSPL), 71-91 (LIHWINDGFMAVFFVLVGMEV), 107-127 (IFPAIAAIGGMVIPAVVYWFI), 137-157 (GWAIPMATDIAFALGIMALLS), 166-186 (IFLLALAIIDDLGAIVVIALF), 189-209 (HGLSVQALIFSAVAIIALILL), 212-232 (FKVSALCAYMVVGAILWASVL), 233-253 (KSGVHATLAGVIIGFSIPLKG), 273-293 (FVILPLFAFANAGVSFAGIDV), 299-319 (PLLLAIASGLIIGKPVGIFGF), 340-360 (IFAVAVLCGIGFTMSMFLASL), and 373-393 (LSRLGILLGSTVSAILGYLFL).

Belongs to the NhaA Na(+)/H(+) (TC 2.A.33) antiporter family.

It is found in the cell inner membrane. The enzyme catalyses Na(+)(in) + 2 H(+)(out) = Na(+)(out) + 2 H(+)(in). In terms of biological role, na(+)/H(+) antiporter that extrudes sodium in exchange for external protons. The protein is Na(+)/H(+) antiporter NhaA of Haemophilus influenzae (strain PittGG).